We begin with the raw amino-acid sequence, 347 residues long: Protein pelota homolog (347 aa).

The protein belongs to the eukaryotic release factor 1 family. Pelota subfamily. Monomer. A divalent metal cation serves as cofactor.

The protein localises to the cytoplasm. Its function is as follows. May function in recognizing stalled ribosomes, interact with stem-loop structures in stalled mRNA molecules, and effect endonucleolytic cleavage of the mRNA. May play a role in the release non-functional ribosomes and degradation of damaged mRNAs. Has endoribonuclease activity. In Methanococcoides burtonii (strain DSM 6242 / NBRC 107633 / OCM 468 / ACE-M), this protein is Protein pelota homolog.